A 103-amino-acid chain; its full sequence is MQPNDITFFQRFQNDILAGRKTITIRDASESHFKAGDALRVGRFEDDGYFCTIEVTGTSTVTLDTLNEKHAQQENMSLDELKRVIAEIYPNQTQFYVIDFKCL.

The region spanning 6–94 (ITFFQRFQND…IAEIYPNQTQ (89 aa)) is the ASCH domain. Catalysis depends on K21, which acts as the Proton acceptor. T24 serves as the catalytic Nucleophile. The active-site Proton donor is E74.

It belongs to the N(4)-acetylcytidine amidohydrolase family.

It carries out the reaction N(4)-acetylcytidine + H2O = cytidine + acetate + H(+). It catalyses the reaction N(4)-acetyl-2'-deoxycytidine + H2O = 2'-deoxycytidine + acetate + H(+). The enzyme catalyses N(4)-acetylcytosine + H2O = cytosine + acetate + H(+). Functionally, catalyzes the hydrolysis of N(4)-acetylcytidine (ac4C). This is N(4)-acetylcytidine amidohydrolase (yqfB) from Salmonella typhi.